The sequence spans 205 residues: Large ribosomal subunit protein bL17c (205 aa).

A chloroplast-targeting transit peptide spans 1–89; sequence MASASTTWSM…VIDNGGRVFA (89 aa).

Belongs to the bacterial ribosomal protein bL17 family. In terms of assembly, part of the 50S ribosomal subunit.

It localises to the plastid. The protein localises to the chloroplast. In terms of biological role, this protein binds directly to 23S ribosomal RNA. The sequence is that of Large ribosomal subunit protein bL17c (RPL17) from Nicotiana tabacum (Common tobacco).